The chain runs to 224 residues: Transcription factor HEC3 (224 aa).

Disordered stretches follow at residues 22–42 (SSNN…DPIG) and 68–88 (SLTT…EEEP). Positions 28-37 (KNDDHHHQHN) are enriched in basic and acidic residues. Positions 68 to 77 (SLTTTTLLSG) are enriched in low complexity. Over residues 78 to 88 (DQEDDEDEEEP) the composition is skewed to acidic residues. Positions 125-174 (ISDDPQSVAARHRRERISERIRILQRLVPGGTKMDTASMLDEAIRYVKFL) constitute a bHLH domain. The segment at 183-224 (NNTGYTPPPPQDQASQAVTTSWVSPPPPPSFGRGGRGVGELI) is disordered. The span at 194–204 (DQASQAVTTSW) shows a compositional bias: polar residues. A compositionally biased stretch (gly residues) spans 214–224 (GRGGRGVGELI).

As to quaternary structure, homodimer. Interacts with SPT. As to expression, gynoecium.

It is found in the nucleus. Required for the female reproductive tract development and fertility. This chain is Transcription factor HEC3 (HEC3), found in Arabidopsis thaliana (Mouse-ear cress).